Consider the following 469-residue polypeptide: uncharacterized protein (469 aa).

Basic and acidic residues predominate over residues 152–161 (VREGKEEKKG). The segment at 152–174 (VREGKEEKKGGPPGRGPPGWRRR) is disordered. Coiled-coil stretches lie at residues 346 to 375 (KAAL…RSES) and 423 to 453 (SDIT…KIKG).

This is an uncharacterized protein from Homo sapiens (Human).